The sequence spans 117 residues: Large-conductance mechanosensitive channel (117 aa).

3 helical membrane passes run 7–27 (EFAL…GAAF), 30–50 (IVTA…FGTV), and 64–84 (GMFV…FIFV).

Belongs to the MscL family. As to quaternary structure, homopentamer.

It is found in the cell membrane. Channel that opens in response to stretch forces in the membrane lipid bilayer. May participate in the regulation of osmotic pressure changes within the cell. The chain is Large-conductance mechanosensitive channel from Staphylococcus saprophyticus subsp. saprophyticus (strain ATCC 15305 / DSM 20229 / NCIMB 8711 / NCTC 7292 / S-41).